Consider the following 25-residue polypeptide: Chitinolytic alpha-amylase inhibitor PvCAI (25 aa).

Homodimer.

It carries out the reaction Random endo-hydrolysis of N-acetyl-beta-D-glucosaminide (1-&gt;4)-beta-linkages in chitin and chitodextrins.. In terms of biological role, alpha-amylase inhibitor, active against Z.subfasciatus alpha-amylase (ZSA) but not porcine pancreatic alpha-amylase (PPA). Has chitinase activity. This Phaseolus vulgaris (Kidney bean) protein is Chitinolytic alpha-amylase inhibitor PvCAI.